A 206-amino-acid polypeptide reads, in one-letter code: Thymidylate kinase (206 aa).

11–18 (GIDGAGKT) is an ATP binding site.

This sequence belongs to the thymidylate kinase family.

It catalyses the reaction dTMP + ATP = dTDP + ADP. Phosphorylation of dTMP to form dTDP in both de novo and salvage pathways of dTTP synthesis. In Paraburkholderia phytofirmans (strain DSM 17436 / LMG 22146 / PsJN) (Burkholderia phytofirmans), this protein is Thymidylate kinase.